The sequence spans 538 residues: DALR anticodon-binding domain-containing protein 3 (538 aa).

In terms of assembly, part of a complex containing tRNA(Arg) and METTL2. Interacts with tRNA(Arg)(CCU) and tRNA(Arg)(UCU). Interacts with METTL2.

Involved in tRNA methylation. Facilitates the recognition and targeting of tRNA(Arg)(CCU) and tRNA(Arg)(UCU) substrates for N(3)-methylcytidine modification by METTL2. This chain is DALR anticodon-binding domain-containing protein 3 (Dalrd3), found in Rattus norvegicus (Rat).